The following is a 157-amino-acid chain: 2-C-methyl-D-erythritol 2,4-cyclodiphosphate synthase (157 aa).

A divalent metal cation-binding residues include aspartate 8 and histidine 10. 4-CDP-2-C-methyl-D-erythritol 2-phosphate-binding positions include 8–10 and 34–35; these read DVH and HS. Histidine 42 lines the a divalent metal cation pocket. Residues 56–58, 132–135, and arginine 142 contribute to the 4-CDP-2-C-methyl-D-erythritol 2-phosphate site; these read DIG and TTNE.

This sequence belongs to the IspF family. Homotrimer. It depends on a divalent metal cation as a cofactor.

It catalyses the reaction 4-CDP-2-C-methyl-D-erythritol 2-phosphate = 2-C-methyl-D-erythritol 2,4-cyclic diphosphate + CMP. The protein operates within isoprenoid biosynthesis; isopentenyl diphosphate biosynthesis via DXP pathway; isopentenyl diphosphate from 1-deoxy-D-xylulose 5-phosphate: step 4/6. Its function is as follows. Involved in the biosynthesis of isopentenyl diphosphate (IPP) and dimethylallyl diphosphate (DMAPP), two major building blocks of isoprenoid compounds. Catalyzes the conversion of 4-diphosphocytidyl-2-C-methyl-D-erythritol 2-phosphate (CDP-ME2P) to 2-C-methyl-D-erythritol 2,4-cyclodiphosphate (ME-CPP) with a corresponding release of cytidine 5-monophosphate (CMP). This Pelodictyon phaeoclathratiforme (strain DSM 5477 / BU-1) protein is 2-C-methyl-D-erythritol 2,4-cyclodiphosphate synthase.